We begin with the raw amino-acid sequence, 255 residues long: Receptor expression-enhancing protein 3 (255 aa).

Helical transmembrane passes span 1 to 21, 35 to 55, and 59 to 79; these read MVSW…YPAY, YVRW…ETVA, and VAWF…LLSP. Residues 158-242 are disordered; that stretch reads TIQGDEPVGQ…KGRKEVRYGS (85 aa). Thr201 carries the phosphothreonine modification. Position 210 is a phosphoserine (Ser210). The segment covering 222-231 has biased composition (polar residues); the sequence is RSQSMKSVKT.

The protein belongs to the DP1 family. In terms of tissue distribution, expressed in circumvallate papillae.

The protein localises to the endoplasmic reticulum membrane. Microtubule-binding protein required to ensure proper cell division and nuclear envelope reassembly by sequestering the endoplasmic reticulum away from chromosomes during mitosis. Probably acts by clearing the endoplasmic reticulum membrane from metaphase chromosomes. The sequence is that of Receptor expression-enhancing protein 3 (REEP3) from Homo sapiens (Human).